The primary structure comprises 283 residues: Homeobox protein Hox-A9a (283 aa).

2 disordered regions span residues 25–54 and 162–181; these read VPRYSAGPGHQHSRQPASIGDPHSELGTCS and EKDAVSSHTGDGVDTEEKPG. The segment at residues 216–275 is a DNA-binding region (homeobox); it reads TRKKRCPYTKHQILELEKEFLFNTYLTRDRRYEVARLLNLTERQVKIWFQNRRMKMKKFN.

The protein belongs to the Abd-B homeobox family.

It localises to the nucleus. Sequence-specific transcription factor which is part of a developmental regulatory system that provides cells with specific positional identities on the anterior-posterior axis. This chain is Homeobox protein Hox-A9a (hoxa9a), found in Takifugu rubripes (Japanese pufferfish).